The following is a 162-amino-acid chain: SsrA-binding protein (162 aa).

It belongs to the SmpB family.

Its subcellular location is the cytoplasm. In terms of biological role, required for rescue of stalled ribosomes mediated by trans-translation. Binds to transfer-messenger RNA (tmRNA), required for stable association of tmRNA with ribosomes. tmRNA and SmpB together mimic tRNA shape, replacing the anticodon stem-loop with SmpB. tmRNA is encoded by the ssrA gene; the 2 termini fold to resemble tRNA(Ala) and it encodes a 'tag peptide', a short internal open reading frame. During trans-translation Ala-aminoacylated tmRNA acts like a tRNA, entering the A-site of stalled ribosomes, displacing the stalled mRNA. The ribosome then switches to translate the ORF on the tmRNA; the nascent peptide is terminated with the 'tag peptide' encoded by the tmRNA and targeted for degradation. The ribosome is freed to recommence translation, which seems to be the essential function of trans-translation. This chain is SsrA-binding protein, found in Granulibacter bethesdensis (strain ATCC BAA-1260 / CGDNIH1).